The primary structure comprises 293 residues: 4-diphosphocytidyl-2-C-methyl-D-erythritol kinase (293 aa).

Residue lysine 11 is part of the active site. ATP is bound at residue 96–106 (PVAAGLGGGSS). Aspartate 138 is an active-site residue.

It belongs to the GHMP kinase family. IspE subfamily.

It carries out the reaction 4-CDP-2-C-methyl-D-erythritol + ATP = 4-CDP-2-C-methyl-D-erythritol 2-phosphate + ADP + H(+). The protein operates within isoprenoid biosynthesis; isopentenyl diphosphate biosynthesis via DXP pathway; isopentenyl diphosphate from 1-deoxy-D-xylulose 5-phosphate: step 3/6. Functionally, catalyzes the phosphorylation of the position 2 hydroxy group of 4-diphosphocytidyl-2C-methyl-D-erythritol. This is 4-diphosphocytidyl-2-C-methyl-D-erythritol kinase from Xanthobacter autotrophicus (strain ATCC BAA-1158 / Py2).